Reading from the N-terminus, the 611-residue chain is Zinc metalloproteinase-disintegrin-like MTP9 (611 aa).

Positions 1–20 (MIEVLLVTICFTVFPYQGSS) are cleaved as a signal peptide. Residues 21 to 191 (IILESGNVND…DEPIEKISQL (171 aa)) constitute a propeptide that is removed on maturation. The 197-residue stretch at 205 to 401 (KYIELYVVVD…VRPQCILNKP (197 aa)) folds into the Peptidase M12B domain. E208 is a Ca(2+) binding site. N282 is a glycosylation site (N-linked (GlcNAc...) asparagine). D292 contacts Ca(2+). Cystine bridges form between C316–C396, C356–C380, and C358–C363. Zn(2+)-binding residues include H341, H345, and H351. 7 residues coordinate Ca(2+): C396, N399, N414, F416, E418, E421, and D424. One can recognise a Disintegrin domain in the interval 409 to 493 (PPVCGNYFVE…ECPTDSFQRN (85 aa)). Intrachain disulfides connect C412-C441, C423-C436, C425-C431, C435-C456, C447-C453, C452-C478, C465-C485, C472-C504, C497-C509, C516-C566, C531-C573, C541-C575, C544-C554, C561-C599, and C593-C604. A D/ECD-tripeptide motif is present at residues 471–473 (DCD). Residues D473, L474, E476, and D488 each contribute to the Ca(2+) site. N-linked (GlcNAc...) asparagine glycans are attached at residues N548 and N570.

Belongs to the venom metalloproteinase (M12B) family. P-III subfamily. As to quaternary structure, monomer. Requires Zn(2+) as cofactor. As to expression, expressed by the venom gland.

The protein localises to the secreted. Functionally, snake venom zinc metalloproteinase that may impair hemostasis in the prey. This chain is Zinc metalloproteinase-disintegrin-like MTP9, found in Drysdalia coronoides (White-lipped snake).